Here is a 725-residue protein sequence, read N- to C-terminus: Methionine--tRNA ligase (725 aa).

The 'HIGH' region motif lies at proline 27–histidine 37. 4 residues coordinate Zn(2+): cysteine 158, cysteine 161, cysteine 171, and cysteine 174. Residues lysine 348 to serine 352 carry the 'KMSKS' region motif. Lysine 351 serves as a coordination point for ATP. Positions aspartate 619 to lysine 725 constitute a tRNA-binding domain.

The protein belongs to the class-I aminoacyl-tRNA synthetase family. MetG type 1 subfamily. As to quaternary structure, homodimer. Zn(2+) serves as cofactor.

The protein localises to the cytoplasm. The catalysed reaction is tRNA(Met) + L-methionine + ATP = L-methionyl-tRNA(Met) + AMP + diphosphate. Functionally, is required not only for elongation of protein synthesis but also for the initiation of all mRNA translation through initiator tRNA(fMet) aminoacylation. The protein is Methionine--tRNA ligase of Burkholderia pseudomallei (strain 1710b).